A 538-amino-acid chain; its full sequence is Glutamyl-tRNA(Gln) amidotransferase subunit B, mitochondrial (538 aa).

This sequence belongs to the GatB/GatE family. GatB subfamily. Subunit of the heterotrimeric GatCAB amidotransferase (AdT) complex, composed of A, B and C subunits.

It localises to the mitochondrion. The catalysed reaction is L-glutamyl-tRNA(Gln) + L-glutamine + ATP + H2O = L-glutaminyl-tRNA(Gln) + L-glutamate + ADP + phosphate + H(+). In terms of biological role, allows the formation of correctly charged Gln-tRNA(Gln) through the transamidation of misacylated Glu-tRNA(Gln) in the mitochondria. The reaction takes place in the presence of glutamine and ATP through an activated gamma-phospho-Glu-tRNA(Gln). The protein is Glutamyl-tRNA(Gln) amidotransferase subunit B, mitochondrial of Dictyostelium discoideum (Social amoeba).